The following is a 340-amino-acid chain: Phosphoribosylformylglycinamidine cyclo-ligase (340 aa).

Belongs to the AIR synthase family.

It is found in the cytoplasm. The catalysed reaction is 2-formamido-N(1)-(5-O-phospho-beta-D-ribosyl)acetamidine + ATP = 5-amino-1-(5-phospho-beta-D-ribosyl)imidazole + ADP + phosphate + H(+). The protein operates within purine metabolism; IMP biosynthesis via de novo pathway; 5-amino-1-(5-phospho-D-ribosyl)imidazole from N(2)-formyl-N(1)-(5-phospho-D-ribosyl)glycinamide: step 2/2. The polypeptide is Phosphoribosylformylglycinamidine cyclo-ligase (Streptococcus pneumoniae (strain CGSP14)).